The following is a 445-amino-acid chain: Phosphoglucosamine mutase (445 aa).

The active-site Phosphoserine intermediate is the S102. S102, D241, D243, and D245 together coordinate Mg(2+). Phosphoserine is present on S102.

The protein belongs to the phosphohexose mutase family. Requires Mg(2+) as cofactor. Post-translationally, activated by phosphorylation.

It carries out the reaction alpha-D-glucosamine 1-phosphate = D-glucosamine 6-phosphate. Its function is as follows. Catalyzes the conversion of glucosamine-6-phosphate to glucosamine-1-phosphate. This is Phosphoglucosamine mutase from Proteus mirabilis (strain HI4320).